The primary structure comprises 155 residues: Endoribonuclease YbeY (155 aa).

Residues histidine 120, histidine 124, and histidine 130 each contribute to the Zn(2+) site.

The protein belongs to the endoribonuclease YbeY family. It depends on Zn(2+) as a cofactor.

It is found in the cytoplasm. Its function is as follows. Single strand-specific metallo-endoribonuclease involved in late-stage 70S ribosome quality control and in maturation of the 3' terminus of the 16S rRNA. This is Endoribonuclease YbeY from Staphylococcus aureus (strain bovine RF122 / ET3-1).